A 403-amino-acid chain; its full sequence is Argininosuccinate synthase (403 aa).

ATP contacts are provided by residues 13–21 (AYSGGLDTS) and alanine 40. Residues tyrosine 92 and serine 97 each coordinate L-citrulline. Position 122 (glycine 122) interacts with ATP. Positions 124, 128, and 129 each coordinate L-aspartate. L-citrulline is bound at residue asparagine 128. Residues arginine 132, serine 181, serine 190, glutamate 266, and tyrosine 278 each contribute to the L-citrulline site.

The protein belongs to the argininosuccinate synthase family. Type 1 subfamily. Homotetramer.

Its subcellular location is the cytoplasm. The enzyme catalyses L-citrulline + L-aspartate + ATP = 2-(N(omega)-L-arginino)succinate + AMP + diphosphate + H(+). Its pathway is amino-acid biosynthesis; L-arginine biosynthesis; L-arginine from L-ornithine and carbamoyl phosphate: step 2/3. The polypeptide is Argininosuccinate synthase (Aliivibrio fischeri (strain MJ11) (Vibrio fischeri)).